The sequence spans 109 residues: Tyrosine-protein phosphatase 6 (109 aa).

The Tyrosine-protein phosphatase domain occupies 1–109 (YNINVIVMVC…SEDETTPLCV (109 aa)). Substrate is bound at residue aspartate 76.

It belongs to the protein-tyrosine phosphatase family.

It catalyses the reaction O-phospho-L-tyrosyl-[protein] + H2O = L-tyrosyl-[protein] + phosphate. In Styela plicata (Wrinkled sea squirt), this protein is Tyrosine-protein phosphatase 6 (STY-6).